The sequence spans 542 residues: Valine N-monooxygenase 1 (542 aa).

The Cytoplasmic portion of the chain corresponds to 1–21 (MAMNVSTTIGLLNATSFASSS). The chain crosses the membrane as a helical; Signal-anchor for type II membrane protein span at residues 22–42 (SINTVKILFVTLFISIVSTIV). Topologically, residues 43–542 (KLQKSAANKE…LAPHLYPTSP (500 aa)) are lumenal. A glycan (N-linked (GlcNAc...) asparagine) is linked at Asn278. Cys478 contacts heme. A glycan (N-linked (GlcNAc...) asparagine) is linked at Asn506.

It belongs to the cytochrome P450 family. Requires heme as cofactor. As to expression, expressed in the epidermis, the next two cortex cell layers, the endodermis and the pericycle of leaf petioles. Strong expression around the laticifers among the phloem cells and in parenchymatic cells between the protoxylem and the metaxylem cells. In the leaves, preferentially expressed in the mesophyll cells adjacent to the epidermis.

The protein resides in the microsome membrane. The enzyme catalyses L-valine + 2 reduced [NADPH--hemoprotein reductase] + 2 O2 = (E)-2-methylpropanal oxime + 2 oxidized [NADPH--hemoprotein reductase] + CO2 + 3 H2O + 2 H(+). It catalyses the reaction L-valine + reduced [NADPH--hemoprotein reductase] + O2 = N-hydroxy-L-valine + oxidized [NADPH--hemoprotein reductase] + H2O + 2 H(+). The catalysed reaction is N-hydroxy-L-valine + reduced [NADPH--hemoprotein reductase] + O2 = N,N-dihydroxy-L-valine + oxidized [NADPH--hemoprotein reductase] + H2O + H(+). It carries out the reaction L-isoleucine + 2 reduced [NADPH--hemoprotein reductase] + 2 O2 = (1E,2S)-2-methylbutanal oxime + 2 oxidized [NADPH--hemoprotein reductase] + CO2 + 3 H2O + 2 H(+). The enzyme catalyses L-isoleucine + reduced [NADPH--hemoprotein reductase] + O2 = N-hydroxy-L-isoleucine + oxidized [NADPH--hemoprotein reductase] + H2O + 2 H(+). It catalyses the reaction N-hydroxy-L-isoleucine + reduced [NADPH--hemoprotein reductase] + O2 = N,N-dihydroxy-L-isoleucine + oxidized [NADPH--hemoprotein reductase] + H2O + H(+). It participates in secondary metabolite biosynthesis. Its activity is regulated as follows. Inhibited by tetcyclasis but not by 1-aminobenzotriazole (ABT). Involved in the biosynthesis of the cyanogenic glucosides linamarin and lotaustralin. Can use L-valine or L-isoleucine as substrate, but not L-leucine, L-phenylalanine, L-tyrosine, D-valine or D-isoleucine. Catalyzes multi-step reactions starting with two successive N-hydroxylations using L-valine and L-isoleucine as substrates leading to the formation of N,N-dihydroxy-L-valine and N,N-dihydroxy-L-isoleucine, respectively; following spontaneous reactions lead to the production of (E)-2-methylpropanal oxime and (1E,2S)-2-methylbutanal oxime, respectively. The polypeptide is Valine N-monooxygenase 1 (Manihot esculenta (Cassava)).